Consider the following 388-residue polypeptide: Mycinamicin VIII C21 methyl hydroxylase (388 aa).

5 residues coordinate heme: H87, R91, R279, H335, and C337.

The protein belongs to the cytochrome P450 family. The cofactor is heme.

It participates in antibiotic biosynthesis; mycinamicin biosynthesis. In terms of biological role, involved in the biosynthesis of mycinamicin, a 16-membered macrolide antibiotic. Catalyzes hydroxylation at the C21 methyl group of mycinamicin VIII, the earliest macrolide form in the postpolyketide synthase tailoring pathway, leading to mycinamicin VII. Uses ferredoxin MycCII in electron transfer for catalysis. This chain is Mycinamicin VIII C21 methyl hydroxylase, found in Micromonospora griseorubida.